A 409-amino-acid chain; its full sequence is Tryptophan synthase beta chain (409 aa).

Lys98 carries the post-translational modification N6-(pyridoxal phosphate)lysine.

The protein belongs to the TrpB family. As to quaternary structure, tetramer of two alpha and two beta chains. The cofactor is pyridoxal 5'-phosphate.

It carries out the reaction (1S,2R)-1-C-(indol-3-yl)glycerol 3-phosphate + L-serine = D-glyceraldehyde 3-phosphate + L-tryptophan + H2O. The protein operates within amino-acid biosynthesis; L-tryptophan biosynthesis; L-tryptophan from chorismate: step 5/5. Functionally, the beta subunit is responsible for the synthesis of L-tryptophan from indole and L-serine. In Cereibacter sphaeroides (strain ATCC 17023 / DSM 158 / JCM 6121 / CCUG 31486 / LMG 2827 / NBRC 12203 / NCIMB 8253 / ATH 2.4.1.) (Rhodobacter sphaeroides), this protein is Tryptophan synthase beta chain (trpB).